We begin with the raw amino-acid sequence, 364 residues long: tRNA-specific 2-thiouridylase MnmA (364 aa).

ATP contacts are provided by residues 12-19 (GISGGVDS) and M38. An interaction with target base in tRNA region spans residues 98–100 (NPD). The active-site Nucleophile is C103. A disulfide bond links C103 and C199. G127 lines the ATP pocket. The interaction with tRNA stretch occupies residues 149 to 151 (KEQ). The Cysteine persulfide intermediate role is filled by C199. The tract at residues 311-312 (RY) is interaction with tRNA.

This sequence belongs to the MnmA/TRMU family.

The protein localises to the cytoplasm. The catalysed reaction is S-sulfanyl-L-cysteinyl-[protein] + uridine(34) in tRNA + AH2 + ATP = 2-thiouridine(34) in tRNA + L-cysteinyl-[protein] + A + AMP + diphosphate + H(+). Catalyzes the 2-thiolation of uridine at the wobble position (U34) of tRNA, leading to the formation of s(2)U34. In Hahella chejuensis (strain KCTC 2396), this protein is tRNA-specific 2-thiouridylase MnmA.